The primary structure comprises 419 residues: Creatine kinase S-type, mitochondrial (419 aa).

A mitochondrion-targeting transit peptide spans 1-39; the sequence is MASTFSKLLTGRNASLLFATLGTGALTTGYLLNKQNVCA. Residues 40–64 form a cardiolipin-binding region; that stretch reads AAREQHKLFPPSADYPDLRKHNNCM. The 87-residue stretch at 46–132 folds into the Phosphagen kinase N-terminal domain; sequence KLFPPSADYP…FDPVIKLRHN (87 aa). The region spanning 159-401 is the Phosphagen kinase C-terminal domain; it reads YVLSSRVRTG…NYLVDCEKKL (243 aa). ATP-binding positions include 162 to 166 and H225; that span reads SSRVR. Y255 carries the phosphotyrosine modification. Residues R270, R326, 354-359, and D369 contribute to the ATP site; that span reads RGTGGV. Position 356 is a phosphothreonine (T356).

The protein belongs to the ATP:guanido phosphotransferase family. Exists as an octamer composed of four CKMT2 homodimers.

It localises to the mitochondrion inner membrane. It carries out the reaction creatine + ATP = N-phosphocreatine + ADP + H(+). Its function is as follows. Reversibly catalyzes the transfer of phosphate between ATP and various phosphogens (e.g. creatine phosphate). Creatine kinase isoenzymes play a central role in energy transduction in tissues with large, fluctuating energy demands, such as skeletal muscle, heart, brain and spermatozoa. The chain is Creatine kinase S-type, mitochondrial (CKMT2) from Bos taurus (Bovine).